The following is a 334-amino-acid chain: D-alanine--D-alanine ligase (334 aa).

The 206-residue stretch at 124-329 (KMWFSALGIP…FAQYLSGNIL (206 aa)) folds into the ATP-grasp domain. Residue 154–209 (ALAKWGSIFIKAASQGSSVGCYRVDSIEQLASSLEEAFTFSPYVVIEKTITARELE) participates in ATP binding. Mg(2+) is bound by residues Asp-283, Glu-296, and Asn-298.

This sequence belongs to the D-alanine--D-alanine ligase family. The cofactor is Mg(2+). Mn(2+) is required as a cofactor.

It localises to the cytoplasm. The enzyme catalyses 2 D-alanine + ATP = D-alanyl-D-alanine + ADP + phosphate + H(+). It functions in the pathway cell wall biogenesis; peptidoglycan biosynthesis. Cell wall formation. The sequence is that of D-alanine--D-alanine ligase from Shewanella pealeana (strain ATCC 700345 / ANG-SQ1).